The following is a 365-amino-acid chain: GTPase Obg (365 aa).

Residues 1–177 enclose the Obg domain; the sequence is MFTDYVRILA…GQFLLELKTI (177 aa). The disordered stretch occupies residues 64–85; it reads QFAEDGQPGKGQKRKGRDGKNL. The OBG-type G domain maps to 178-348; sequence ADVGFVGLPN…FLNSCRKSFE (171 aa). Residues 184-191, 209-213, 231-234, 300-303, and 329-331 contribute to the GTP site; these read GLPNSGKS, FTTLK, DIPG, NKVD, and SAL. Positions 191 and 211 each coordinate Mg(2+).

The protein belongs to the TRAFAC class OBG-HflX-like GTPase superfamily. OBG GTPase family. In terms of assembly, monomer. Mg(2+) serves as cofactor.

Its subcellular location is the cytoplasm. An essential GTPase which binds GTP, GDP and possibly (p)ppGpp with moderate affinity, with high nucleotide exchange rates and a fairly low GTP hydrolysis rate. Plays a role in control of the cell cycle, stress response, ribosome biogenesis and in those bacteria that undergo differentiation, in morphogenesis control. This Methylacidiphilum infernorum (isolate V4) (Methylokorus infernorum (strain V4)) protein is GTPase Obg.